The primary structure comprises 509 residues: Dihydrolipoyl dehydrogenase, mitochondrial (509 aa).

A mitochondrion-targeting transit peptide spans 1 to 35; it reads MQSWSRVYCSLAKRGHFNRISHGLQGLSAVPLRTY. N6-acetyllysine; alternate is present on Lys-66. Residue Lys-66 is modified to N6-succinyllysine; alternate. FAD-binding positions include 71–80 and Lys-89; that span reads EKNETLGGTC. Cys-80 and Cys-85 are joined by a disulfide. N6-acetyllysine; alternate occurs at positions 104, 122, 132, and 143. Residues Lys-104, Lys-122, Lys-132, and Lys-143 each carry the N6-succinyllysine; alternate modification. Gly-154 serves as a coordination point for FAD. N6-succinyllysine occurs at positions 159 and 166. 183 to 185 contributes to the FAD binding site; it reads TGS. NAD(+)-binding positions include 220 to 227 and Glu-243; that span reads GAGVIGVE. 2 positions are modified to N6-succinyllysine: Lys-273 and Lys-277. Val-278 lines the NAD(+) pocket. Phosphoserine occurs at positions 285 and 297. NAD(+) is bound at residue Gly-314. Lys-346 carries the N6-acetyllysine modification. FAD-binding positions include Asp-355 and 361–364; that span reads MLAH. Residue Lys-410 is modified to N6-acetyllysine; alternate. Lys-410 carries the post-translational modification N6-succinyllysine; alternate. 2 positions are modified to N6-acetyllysine: Lys-417 and Lys-420. Lys-430 carries the post-translational modification N6-succinyllysine. His-487 acts as the Proton acceptor in catalysis. Ser-502 is modified (phosphoserine). An N6-acetyllysine; alternate modification is found at Lys-505. Lys-505 bears the N6-succinyllysine; alternate mark.

The protein belongs to the class-I pyridine nucleotide-disulfide oxidoreductase family. Homodimer. Part of the multimeric pyruvate dehydrogenase complex that contains multiple copies of pyruvate dehydrogenase (subunits PDHA (PDHA1 or PDHA2) and PDHB, E1), dihydrolipoamide acetyltransferase (DLAT, E2) and lipoamide dehydrogenase (DLD, E3). These subunits are bound to an inner core composed of about 48 DLAT and 12 PDHX molecules (by non covalent bonds). The 2-oxoglutarate dehydrogenase complex is composed of OGDH (2-oxoglutarate dehydrogenase; E1), DLST (dihydrolipoamide succinyltransferase; E2), DLD (dihydrolipoamide dehydrogenase; E3) and the assembly factor KGD4. It contains multiple copies of the three enzymatic components (E1, E2 and E3). In the nucleus, the 2-oxoglutarate dehydrogenase complex associates with KAT2A. Interacts with PDHX. It depends on FAD as a cofactor. In terms of processing, tyrosine phosphorylated.

The protein localises to the mitochondrion matrix. It is found in the nucleus. Its subcellular location is the cell projection. The protein resides in the cilium. It localises to the flagellum. The protein localises to the cytoplasmic vesicle. It is found in the secretory vesicle. Its subcellular location is the acrosome. The enzyme catalyses N(6)-[(R)-dihydrolipoyl]-L-lysyl-[protein] + NAD(+) = N(6)-[(R)-lipoyl]-L-lysyl-[protein] + NADH + H(+). In terms of biological role, lipoamide dehydrogenase is a component of the glycine cleavage system as well as an E3 component of three alpha-ketoacid dehydrogenase complexes (pyruvate-, alpha-ketoglutarate-, and branched-chain amino acid-dehydrogenase complex). The 2-oxoglutarate dehydrogenase complex is mainly active in the mitochondrion. A fraction of the 2-oxoglutarate dehydrogenase complex also localizes in the nucleus and is required for lysine succinylation of histones: associates with KAT2A on chromatin and provides succinyl-CoA to histone succinyltransferase KAT2A. In monomeric form may have additional moonlighting function as serine protease. Involved in the hyperactivation of spermatazoa during capacitation and in the spermatazoal acrosome reaction. The chain is Dihydrolipoyl dehydrogenase, mitochondrial (DLD) from Macaca fascicularis (Crab-eating macaque).